A 613-amino-acid chain; its full sequence is Dihydroxy-acid dehydratase (613 aa).

D81 is a Mg(2+) binding site. Residue C122 coordinates [2Fe-2S] cluster. Mg(2+) is bound by residues D123 and K124. K124 is modified (N6-carboxylysine). C195 contacts [2Fe-2S] cluster. Mg(2+) is bound at residue E491. S517 acts as the Proton acceptor in catalysis.

The protein belongs to the IlvD/Edd family. Homodimer. [2Fe-2S] cluster is required as a cofactor. It depends on Mg(2+) as a cofactor.

It catalyses the reaction (2R)-2,3-dihydroxy-3-methylbutanoate = 3-methyl-2-oxobutanoate + H2O. The catalysed reaction is (2R,3R)-2,3-dihydroxy-3-methylpentanoate = (S)-3-methyl-2-oxopentanoate + H2O. Its pathway is amino-acid biosynthesis; L-isoleucine biosynthesis; L-isoleucine from 2-oxobutanoate: step 3/4. The protein operates within amino-acid biosynthesis; L-valine biosynthesis; L-valine from pyruvate: step 3/4. Functionally, functions in the biosynthesis of branched-chain amino acids. Catalyzes the dehydration of (2R,3R)-2,3-dihydroxy-3-methylpentanoate (2,3-dihydroxy-3-methylvalerate) into 2-oxo-3-methylpentanoate (2-oxo-3-methylvalerate) and of (2R)-2,3-dihydroxy-3-methylbutanoate (2,3-dihydroxyisovalerate) into 2-oxo-3-methylbutanoate (2-oxoisovalerate), the penultimate precursor to L-isoleucine and L-valine, respectively. This is Dihydroxy-acid dehydratase from Vibrio vulnificus (strain CMCP6).